The following is a 390-amino-acid chain: GTPase Obg (390 aa).

The 159-residue stretch at 1–159 (MKFVDEAVVK…REIRLELLLL (159 aa)) folds into the Obg domain. Positions 160 to 333 (ADVGMLGLPN…LCYKLADFME (174 aa)) constitute an OBG-type G domain. GTP is bound by residues 166–173 (GLPNAGKS), 191–195 (FTTLI), 213–216 (DIPG), 283–286 (NKVD), and 314–316 (SAI). Mg(2+) contacts are provided by serine 173 and threonine 193. Acidic residues predominate over residues 367–382 (TEDDDDWDDWDDEEDD). Residues 367–390 (TEDDDDWDDWDDEEDDGHVVYVRD) form a disordered region.

It belongs to the TRAFAC class OBG-HflX-like GTPase superfamily. OBG GTPase family. Monomer. Mg(2+) serves as cofactor.

The protein localises to the cytoplasm. Functionally, an essential GTPase which binds GTP, GDP and possibly (p)ppGpp with moderate affinity, with high nucleotide exchange rates and a fairly low GTP hydrolysis rate. Plays a role in control of the cell cycle, stress response, ribosome biogenesis and in those bacteria that undergo differentiation, in morphogenesis control. The protein is GTPase Obg of Vibrio parahaemolyticus serotype O3:K6 (strain RIMD 2210633).